The primary structure comprises 132 residues: L-ectoine synthase (132 aa).

The protein belongs to the ectoine synthase family.

The catalysed reaction is (2S)-4-acetamido-2-aminobutanoate = L-ectoine + H2O. It functions in the pathway amine and polyamine biosynthesis; ectoine biosynthesis; L-ectoine from L-aspartate 4-semialdehyde: step 3/3. Its function is as follows. Catalyzes the circularization of gamma-N-acetyl-alpha,gamma-diaminobutyric acid (ADABA) to ectoine (1,4,5,6-tetrahydro-2-methyl-4-pyrimidine carboxylic acid), which is an excellent osmoprotectant. This chain is L-ectoine synthase, found in Rhodococcus opacus (strain B4).